A 143-amino-acid polypeptide reads, in one-letter code: Transcriptional regulator MraZ (143 aa).

SpoVT-AbrB domains follow at residues 5–47 (TYTP…PKEE) and 76–119 (TDEQ…DKQA).

This sequence belongs to the MraZ family. In terms of assembly, forms oligomers.

The protein localises to the cytoplasm. It localises to the nucleoid. This chain is Transcriptional regulator MraZ, found in Nocardia farcinica (strain IFM 10152).